Here is a 335-residue protein sequence, read N- to C-terminus: 4-hydroxy-3-methylbut-2-enyl diphosphate reductase 2 (335 aa).

A [4Fe-4S] cluster-binding site is contributed by Cys-37. Positions 66 and 99 each coordinate (2E)-4-hydroxy-3-methylbut-2-enyl diphosphate. Positions 66 and 99 each coordinate dimethylallyl diphosphate. His-66 and His-99 together coordinate isopentenyl diphosphate. [4Fe-4S] cluster is bound at residue Cys-121. His-149 lines the (2E)-4-hydroxy-3-methylbut-2-enyl diphosphate pocket. His-149 is a dimethylallyl diphosphate binding site. His-149 provides a ligand contact to isopentenyl diphosphate. Glu-151 acts as the Proton donor in catalysis. Thr-189 contacts (2E)-4-hydroxy-3-methylbut-2-enyl diphosphate. [4Fe-4S] cluster is bound at residue Cys-219. Positions 247, 248, 249, and 292 each coordinate (2E)-4-hydroxy-3-methylbut-2-enyl diphosphate. Positions 247, 248, 249, and 292 each coordinate dimethylallyl diphosphate. Isopentenyl diphosphate contacts are provided by Ser-247, Ser-248, Asn-249, and Ser-292.

Belongs to the IspH family. Requires [4Fe-4S] cluster as cofactor.

It carries out the reaction isopentenyl diphosphate + 2 oxidized [2Fe-2S]-[ferredoxin] + H2O = (2E)-4-hydroxy-3-methylbut-2-enyl diphosphate + 2 reduced [2Fe-2S]-[ferredoxin] + 2 H(+). The enzyme catalyses dimethylallyl diphosphate + 2 oxidized [2Fe-2S]-[ferredoxin] + H2O = (2E)-4-hydroxy-3-methylbut-2-enyl diphosphate + 2 reduced [2Fe-2S]-[ferredoxin] + 2 H(+). Its pathway is isoprenoid biosynthesis; dimethylallyl diphosphate biosynthesis; dimethylallyl diphosphate from (2E)-4-hydroxy-3-methylbutenyl diphosphate: step 1/1. It participates in isoprenoid biosynthesis; isopentenyl diphosphate biosynthesis via DXP pathway; isopentenyl diphosphate from 1-deoxy-D-xylulose 5-phosphate: step 6/6. Catalyzes the conversion of 1-hydroxy-2-methyl-2-(E)-butenyl 4-diphosphate (HMBPP) into a mixture of isopentenyl diphosphate (IPP) and dimethylallyl diphosphate (DMAPP). Acts in the terminal step of the DOXP/MEP pathway for isoprenoid precursor biosynthesis. Has a higher activity compared with LytB2. Is essential for M.tuberculosis growth in vitro. The sequence is that of 4-hydroxy-3-methylbut-2-enyl diphosphate reductase 2 from Mycobacterium tuberculosis (strain ATCC 25618 / H37Rv).